Here is a 551-residue protein sequence, read N- to C-terminus: Putative BTB/POZ domain-containing protein L76 (551 aa).

Positions 19 to 90 (TDIILEIEDD…FYGQENDVID (72 aa)) constitute a BTB domain.

The protein belongs to the mimivirus BTB/WD family.

The sequence is that of Putative BTB/POZ domain-containing protein L76 from Acanthamoeba polyphaga (Amoeba).